Consider the following 404-residue polypeptide: Cysteine desulfurase IscS (404 aa).

Pyridoxal 5'-phosphate is bound by residues 75–76 (AT), asparagine 155, glutamine 183, and 203–205 (SAH). An N6-(pyridoxal phosphate)lysine modification is found at lysine 206. Position 243 (threonine 243) interacts with pyridoxal 5'-phosphate. Catalysis depends on cysteine 328, which acts as the Cysteine persulfide intermediate. Position 328 (cysteine 328) interacts with [2Fe-2S] cluster.

It belongs to the class-V pyridoxal-phosphate-dependent aminotransferase family. NifS/IscS subfamily. As to quaternary structure, homodimer. Forms a heterotetramer with IscU, interacts with other sulfur acceptors. Requires pyridoxal 5'-phosphate as cofactor.

Its subcellular location is the cytoplasm. The catalysed reaction is (sulfur carrier)-H + L-cysteine = (sulfur carrier)-SH + L-alanine. It participates in cofactor biosynthesis; iron-sulfur cluster biosynthesis. Its function is as follows. Master enzyme that delivers sulfur to a number of partners involved in Fe-S cluster assembly, tRNA modification or cofactor biosynthesis. Catalyzes the removal of elemental sulfur atoms from cysteine to produce alanine. Functions as a sulfur delivery protein for Fe-S cluster synthesis onto IscU, an Fe-S scaffold assembly protein, as well as other S acceptor proteins. This chain is Cysteine desulfurase IscS, found in Vibrio campbellii (strain ATCC BAA-1116).